Here is a 248-residue protein sequence, read N- to C-terminus: Conoporin-Cn1 (248 aa).

Residues 1–23 form the signal peptide; the sequence is MGVQFPALKTMVTVFLLLMGNMS. The tract at residues 45 to 64 is N-terminal region; the sequence is TPGSSLYGVALKDLADTSYN. Residues glycine 120, serine 138, proline 140, tyrosine 167, and tyrosine 171 each coordinate phosphocholine.

It belongs to the actinoporin family. Conoidea subfamily. In terms of assembly, octamer or nonamer in membranes. Monomer in the soluble state. In terms of processing, 9 isoforms are detected in the injectable venom, mainly corresponding to different oxidative states. In terms of tissue distribution, expressed by the venom duct.

It is found in the secreted. Its subcellular location is the nematocyst. The protein localises to the target cell membrane. Pore-forming protein that forms pores of around 1 nm and causes cardiac stimulation and cytolysis. This Conus consors (Singed cone) protein is Conoporin-Cn1.